The primary structure comprises 824 residues: A-adding tRNA nucleotidyltransferase (824 aa).

CBS domains are found at residues 305–363 (MNTP…DEPI) and 367–423 (VNRD…LEKL). 459–462 (GVVR) provides a ligand contact to ATP. Positions 472 and 474 each coordinate Mg(2+). ATP-binding positions include 545-546 (RD), Asn550, 590-599 (DPVRILRALR), Arg603, and Arg632.

This sequence belongs to the tRNA nucleotidyltransferase/poly(A) polymerase family. Requires Mg(2+) as cofactor.

The enzyme catalyses a tRNA with a 3' CC end + ATP = a tRNA with a 3' CCA end + diphosphate. Functionally, tRNA nucleotidyltransferase involved in the synthesis of the tRNA CCA terminus. Adds the terminal adenosine residue to tRNA. Can incorporate CMP into tRNA ending with C74C75 (tRNACC), with very weak efficiency. In Aquifex aeolicus (strain VF5), this protein is A-adding tRNA nucleotidyltransferase.